A 407-amino-acid chain; its full sequence is Arrestin domain-containing protein 2 (407 aa).

It belongs to the arrestin family. Interacts with WWP1 (via WW domains).

In Homo sapiens (Human), this protein is Arrestin domain-containing protein 2 (ARRDC2).